The sequence spans 329 residues: Ankyrin repeat and SOCS box protein 5 (329 aa).

ANK repeat units follow at residues alanine 69–alanine 98, aspartate 102–alanine 131, aspartate 135–leucine 164, cysteine 167–glutamine 196, histidine 200–lysine 229, and tyrosine 232–alanine 261. Positions methionine 278–arginine 329 constitute an SOCS box domain.

Belongs to the ankyrin SOCS box (ASB) family. Expressed in endothelial and smooth muscle cells of collateral arteries as well as in satellite cells.

The protein operates within protein modification; protein ubiquitination. Its function is as follows. May be a substrate-recognition component of a SCF-like ECS (Elongin-Cullin-SOCS-box protein) E3 ubiquitin-protein ligase complex which mediates the ubiquitination and subsequent proteasomal degradation of target proteins. May play a role in the initiation of arteriogenesis. In Oryctolagus cuniculus (Rabbit), this protein is Ankyrin repeat and SOCS box protein 5 (ASB5).